A 577-amino-acid chain; its full sequence is Maltase A1 (577 aa).

Residues 1–19 (MRPQSAACLLLAIVGFVGA) form the signal peptide. N119 and N151 each carry an N-linked (GlcNAc...) asparagine glycan. Catalysis depends on D221, which acts as the Nucleophile. N244 carries an N-linked (GlcNAc...) asparagine glycan. The active-site Proton donor is the E297. N-linked (GlcNAc...) asparagine glycans are attached at residues N315 and N331.

Belongs to the glycosyl hydrolase 13 family.

The enzyme catalyses Hydrolysis of terminal, non-reducing (1-&gt;4)-linked alpha-D-glucose residues with release of alpha-D-glucose.. This Drosophila melanogaster (Fruit fly) protein is Maltase A1 (Mal-A1).